Reading from the N-terminus, the 57-residue chain is Small ribosomal subunit protein eS27 (57 aa).

Zn(2+)-binding residues include Cys10, Cys13, Cys29, and Cys32. The C4-type zinc finger occupies 10 to 32; the sequence is CPDCENEQTVFGKASTEVACAVC.

This sequence belongs to the eukaryotic ribosomal protein eS27 family. Part of the 30S ribosomal subunit. Zn(2+) is required as a cofactor.

This chain is Small ribosomal subunit protein eS27, found in Halobacterium salinarum (strain ATCC 29341 / DSM 671 / R1).